Here is a 341-residue protein sequence, read N- to C-terminus: Mitochondrial transcription factor 1 (341 aa).

S-adenosyl-L-methionine is bound by residues L23, E77, D101, and N137.

This sequence belongs to the class I-like SAM-binding methyltransferase superfamily. rRNA adenine N(6)-methyltransferase family.

Its subcellular location is the mitochondrion intermembrane space. Mitochondrial transcription factor that confers selective promoter recognition on the core subunit of the yeast mitochondrial RNA polymerase. Interacts with DNA in a non-specific manner. This Saccharomyces cerevisiae (strain ATCC 204508 / S288c) (Baker's yeast) protein is Mitochondrial transcription factor 1 (MTF1).